Consider the following 84-residue polypeptide: Small ribosomal subunit protein bS20 (84 aa).

This sequence belongs to the bacterial ribosomal protein bS20 family.

Its function is as follows. Binds directly to 16S ribosomal RNA. The protein is Small ribosomal subunit protein bS20 of Phocaeicola vulgatus (strain ATCC 8482 / DSM 1447 / JCM 5826 / CCUG 4940 / NBRC 14291 / NCTC 11154) (Bacteroides vulgatus).